The sequence spans 115 residues: Synaptobrevin homolog 2 (115 aa).

Over residues 1–16 the composition is skewed to low complexity; that stretch reads MSSSVPYDPYVPPEES. Residues 1-28 are disordered; the sequence is MSSSVPYDPYVPPEESNSGANPNSQNKT. Residues 1–93 lie on the Cytoplasmic side of the membrane; the sequence is MSSSVPYDPY…MWWKDLKMRM (93 aa). Polar residues predominate over residues 17 to 28; the sequence is NSGANPNSQNKT. Residues 27 to 87 form the v-SNARE coiled-coil homology domain; that stretch reads KTAALRQEID…NRVRKQMWWK (61 aa). Residue Ser-58 is modified to Phosphoserine. Lys-62 participates in a covalent cross-link: Glycyl lysine isopeptide (Lys-Gly) (interchain with G-Cter in ubiquitin). A lipid anchor (S-palmitoyl cysteine) is attached at Cys-94. Residues 94–112 traverse the membrane as a helical; Anchor for type IV membrane protein segment; the sequence is CLFLVVIILLVVIIVPIVV. Residues 113–115 lie on the Vesicular side of the membrane; it reads HFS.

The protein belongs to the synaptobrevin family. In terms of processing, palmitoylated by SWF1.

It localises to the endomembrane system. Its function is as follows. SNC1 and SNC2 are vesicle-targeting proteins essential for normal secretory traffic between the Golgi and the plasma membrane. They may also be involved in vesicle fusion. The polypeptide is Synaptobrevin homolog 2 (SNC2) (Saccharomyces cerevisiae (strain ATCC 204508 / S288c) (Baker's yeast)).